A 554-amino-acid chain; its full sequence is Glucose-6-phosphate isomerase (554 aa).

Glu359 functions as the Proton donor in the catalytic mechanism. Active-site residues include His390 and Lys518.

The protein belongs to the GPI family.

It localises to the cytoplasm. It catalyses the reaction alpha-D-glucose 6-phosphate = beta-D-fructose 6-phosphate. It participates in carbohydrate biosynthesis; gluconeogenesis. Its pathway is carbohydrate degradation; glycolysis; D-glyceraldehyde 3-phosphate and glycerone phosphate from D-glucose: step 2/4. Catalyzes the reversible isomerization of glucose-6-phosphate to fructose-6-phosphate. The chain is Glucose-6-phosphate isomerase from Pseudomonas savastanoi pv. phaseolicola (strain 1448A / Race 6) (Pseudomonas syringae pv. phaseolicola (strain 1448A / Race 6)).